We begin with the raw amino-acid sequence, 268 residues long: Tryptophan synthase alpha chain (268 aa).

Active-site proton acceptor residues include E49 and D60.

Belongs to the TrpA family. As to quaternary structure, tetramer of two alpha and two beta chains.

The enzyme catalyses (1S,2R)-1-C-(indol-3-yl)glycerol 3-phosphate + L-serine = D-glyceraldehyde 3-phosphate + L-tryptophan + H2O. Its pathway is amino-acid biosynthesis; L-tryptophan biosynthesis; L-tryptophan from chorismate: step 5/5. The alpha subunit is responsible for the aldol cleavage of indoleglycerol phosphate to indole and glyceraldehyde 3-phosphate. The sequence is that of Tryptophan synthase alpha chain from Shigella sonnei (strain Ss046).